Consider the following 403-residue polypeptide: Ribosomal RNA large subunit methyltransferase I (403 aa).

The region spanning Tyr9–Arg88 is the PUA domain.

It belongs to the methyltransferase superfamily. RlmI family.

It is found in the cytoplasm. It carries out the reaction cytidine(1962) in 23S rRNA + S-adenosyl-L-methionine = 5-methylcytidine(1962) in 23S rRNA + S-adenosyl-L-homocysteine + H(+). Its function is as follows. Specifically methylates the cytosine at position 1962 (m5C1962) of 23S rRNA. The polypeptide is Ribosomal RNA large subunit methyltransferase I (Salmonella paratyphi C (strain RKS4594)).